Reading from the N-terminus, the 117-residue chain is Large ribosomal subunit protein uL18 (117 aa).

It belongs to the universal ribosomal protein uL18 family. Part of the 50S ribosomal subunit; part of the 5S rRNA/L5/L18/L25 subcomplex. Contacts the 5S and 23S rRNAs.

Its function is as follows. This is one of the proteins that bind and probably mediate the attachment of the 5S RNA into the large ribosomal subunit, where it forms part of the central protuberance. The polypeptide is Large ribosomal subunit protein uL18 (Leuconostoc mesenteroides subsp. mesenteroides (strain ATCC 8293 / DSM 20343 / BCRC 11652 / CCM 1803 / JCM 6124 / NCDO 523 / NBRC 100496 / NCIMB 8023 / NCTC 12954 / NRRL B-1118 / 37Y)).